We begin with the raw amino-acid sequence, 623 residues long: Chaperone protein HtpG (623 aa).

An a; substrate-binding region spans residues 1 to 328; it reads MTQEKKKFDA…SEDLPLNISR (328 aa). The interval 329 to 544 is b; the sequence is ESLQHNSILD…ESAMDIRMER (216 aa). The c stretch occupies residues 545–623; it reads FLIEQKQIAN…DIVQKAILSL (79 aa).

It belongs to the heat shock protein 90 family. Homodimer.

The protein localises to the cytoplasm. Molecular chaperone. Has ATPase activity. The polypeptide is Chaperone protein HtpG (Rickettsia canadensis (strain McKiel)).